Here is a 234-residue protein sequence, read N- to C-terminus: Probable chemoreceptor glutamine deamidase CheD 1 (234 aa).

It belongs to the CheD family.

The enzyme catalyses L-glutaminyl-[protein] + H2O = L-glutamyl-[protein] + NH4(+). Its function is as follows. Probably deamidates glutamine residues to glutamate on methyl-accepting chemotaxis receptors (MCPs), playing an important role in chemotaxis. The polypeptide is Probable chemoreceptor glutamine deamidase CheD 1 (Albidiferax ferrireducens (strain ATCC BAA-621 / DSM 15236 / T118) (Rhodoferax ferrireducens)).